We begin with the raw amino-acid sequence, 472 residues long: MAGVEEADKLKQLGNAAFSERKWHLAIDMYTKAIELTKTPTLFCNRALAELRAELPGAALADADAALGIEPTFAKAYYHKASAYLSLGKHKQALTNYKKVVDLAPQNSDAQAKVEFCKKEIRRINFENAIMTPDEAPLSQTIKLGSVRADYDGPRIENETVTVEFVEAMKEHFRLEKLIDRHDVIFILLEVQKILKKCPNFVSINVPVGEEITVCGDTHGQYYDLLNIFKLNGNPLETNRYLFNGDFVDRGSYSFENIMTLFAYKVLYPDHFFLSRGNHEGVSMNRMYGFEGEVTQKYNSEMFRLFTEVFNSLPIGHIINNEVFVVHGGLYSSDKVTLDDLQHPNRFRDIPESGLICESLWSDPQPMPGRAPSKRGVSCLSFGPDVTETFLNNNNLKLLVRSHEVKDEGYEIEHGGKCITVFSAPNYCDQMGNKGAFIRFTGGDMKPRFTTFTHVPHPGKRPMHYATGFGLF.

3 TPR repeats span residues 7-40, 41-73, and 74-107; these read ADKL…TKTP, TLFC…EPTF, and AKAY…APQN. Asp217, His219, Asp246, and Asn278 together coordinate Mn(2+). The active-site Proton donor/acceptor is His279. Mn(2+) contacts are provided by His327 and His403.

This sequence belongs to the PPP phosphatase family. PP-5 (PP-T) subfamily. The cofactor is Mg(2+). Mn(2+) serves as cofactor.

It is found in the cytoplasm. Its subcellular location is the cytosol. The protein localises to the nucleus. The catalysed reaction is O-phospho-L-seryl-[protein] + H2O = L-seryl-[protein] + phosphate. The enzyme catalyses O-phospho-L-threonyl-[protein] + H2O = L-threonyl-[protein] + phosphate. With respect to regulation, activated by arachidonic acid. In terms of biological role, may function as a protein phosphatase. This Trypanosoma brucei brucei (strain 927/4 GUTat10.1) protein is Serine/threonine-protein phosphatase T.